Consider the following 335-residue polypeptide: Biotin synthase (335 aa).

The Radical SAM core domain maps to 39-267; that stretch reads TKIQVCKLIS…ASDVRLSAGR (229 aa). Residues cysteine 54, cysteine 58, and cysteine 61 each contribute to the [4Fe-4S] cluster site. Positions 98, 130, 190, and 262 each coordinate [2Fe-2S] cluster.

It belongs to the radical SAM superfamily. Biotin synthase family. Homodimer. [4Fe-4S] cluster is required as a cofactor. Requires [2Fe-2S] cluster as cofactor.

It catalyses the reaction (4R,5S)-dethiobiotin + (sulfur carrier)-SH + 2 reduced [2Fe-2S]-[ferredoxin] + 2 S-adenosyl-L-methionine = (sulfur carrier)-H + biotin + 2 5'-deoxyadenosine + 2 L-methionine + 2 oxidized [2Fe-2S]-[ferredoxin]. Its pathway is cofactor biosynthesis; biotin biosynthesis; biotin from 7,8-diaminononanoate: step 2/2. Functionally, catalyzes the conversion of dethiobiotin (DTB) to biotin by the insertion of a sulfur atom into dethiobiotin via a radical-based mechanism. The protein is Biotin synthase of Nostoc punctiforme (strain ATCC 29133 / PCC 73102).